The sequence spans 174 residues: Eukaryotic translation elongation factor 1 epsilon-1 (174 aa).

An N-acetylalanine modification is found at A2. The N-terminal stretch occupies residues 2-56 (AAAAELRLLEKSLGLKPGNKYSAQGERQIPVLQTNNGPSLMGLSTIATHLVKQAS). In terms of domain architecture, GST C-terminal spans 50–173 (HLVKQASKEH…FIKNRLYANS (124 aa)). The segment at 57–63 (KEHLLGS) is linker. Residues 64 to 152 (TAEEKAMVQQ…SRWFCHIQHY (89 aa)) form a C-terminal region. Residue K138 is modified to N6-acetyllysine. Positions 153–169 (PDIRQHLSSIVFIKNRL) form a coiled coil.

In terms of assembly, part of a multisubunit complex that groups tRNA ligases for Arg (RARS1), Asp (DARS1), Gln (QARS1), Ile (IARS1), Leu (LARS1), Lys (KARS1), Met (MARS1) the bifunctional ligase for Glu and Pro (EPRS1) and the auxiliary subunits AIMP1/p43, AIMP2/p38 and EEF1E1/p18. Can interact simultaneously with MARS1 and EPRS1. Forms a linear complex that contains MARS1, EEF1E1, EPRS1 and AIMP2 that is at the core of the multisubunit complex. Interacts with ATM and ATR. The interaction with ATM, which takes place independently of TP53, is induced by DNA damage that may occur during genotoxic stress or cell growth. The interaction with ATR is enhanced by UV irradiation.

The protein localises to the cytoplasm. The protein resides in the nucleus. Positive modulator of ATM response to DNA damage. The sequence is that of Eukaryotic translation elongation factor 1 epsilon-1 (Eef1e1) from Mus musculus (Mouse).